The following is a 306-amino-acid chain: Mitochondrial 2-oxoglutarate/malate carrier protein (306 aa).

3 Solcar repeats span residues 7–95, 103–194, and 203–292; these read VPNV…LLER, LSFG…AKQA, and DGIF…MNAA. 6 consecutive transmembrane segments (helical) span residues 9-38, 72-93, 108-122, 172-192, 205-226, and 268-286; these read NVVK…NRMQ, SAGL…AFLL, KAVL…GSFV, PTVL…SQAK, IFCH…SMPV, and FTPY…FIIL.

Belongs to the mitochondrial carrier (TC 2.A.29) family. In terms of assembly, interacts with ant-1.1 and ced-9. Ubiquitously expressed, but highly expressed in the anterior pharynx.

Its subcellular location is the mitochondrion. The protein resides in the mitochondrion inner membrane. It carries out the reaction (S)-malate(in) + 2-oxoglutarate(out) = (S)-malate(out) + 2-oxoglutarate(in). It catalyses the reaction malonate(in) + 2-oxoglutarate(out) = malonate(out) + 2-oxoglutarate(in). The catalysed reaction is succinate(in) + 2-oxoglutarate(out) = succinate(out) + 2-oxoglutarate(in). The enzyme catalyses maleate(in) + 2-oxoglutarate(out) = maleate(out) + 2-oxoglutarate(in). It carries out the reaction oxaloacetate(in) + 2-oxoglutarate(out) = oxaloacetate(out) + 2-oxoglutarate(in). In terms of biological role, catalyzes the transport of 2-oxoglutarate (alpha-oxoglutarate) across the inner mitochondrial membrane in an electroneutral exchange for malate. Can also exchange 2-oxoglutarate for other dicarboxylic acids such as malonate, succinate, maleate and oxaloacetate, although with lower affinity. Contributes to several metabolic processes, including the malate-aspartate shuttle, the oxoglutarate/isocitrate shuttle, in gluconeogenesis from lactate, and in nitrogen metabolism. Maintains mitochondrial fusion and fission events, and the organization and morphology of cristae. Regulator of apoptosis, insulin secretion and germline proliferation. Furthermore, plays a role in the oxidative stress response regulating endogenous levels of reactive oxygen species (ROS). Involved in the regulation of lin-35/Rb-mediated apoptosis in the germline. This chain is Mitochondrial 2-oxoglutarate/malate carrier protein, found in Caenorhabditis elegans.